A 366-amino-acid polypeptide reads, in one-letter code: Spermidine/putrescine import ATP-binding protein PotA (366 aa).

In terms of domain architecture, ABC transporter spans 8-239; the sequence is IRFENVTKQF…PINKFVADFI (232 aa). ATP is bound at residue 41 to 48; the sequence is GPSGCGKT.

The protein belongs to the ABC transporter superfamily. Spermidine/putrescine importer (TC 3.A.1.11.1) family. In terms of assembly, the complex is composed of two ATP-binding proteins (PotA), two transmembrane proteins (PotB and PotC) and a solute-binding protein (PotD).

The protein resides in the cell membrane. The catalysed reaction is ATP + H2O + polyamine-[polyamine-binding protein]Side 1 = ADP + phosphate + polyamineSide 2 + [polyamine-binding protein]Side 1.. Part of the ABC transporter complex PotABCD involved in spermidine/putrescine import. Responsible for energy coupling to the transport system. The protein is Spermidine/putrescine import ATP-binding protein PotA of Listeria monocytogenes serovar 1/2a (strain ATCC BAA-679 / EGD-e).